A 254-amino-acid polypeptide reads, in one-letter code: Dihydroorotate dehydrogenase B (NAD(+)), electron transfer subunit (254 aa).

Residues 1–99 (MLQTEMKVIQ…LGPLGKGFDI (99 aa)) form the FAD-binding FR-type domain. Residues 50–53 (RPIS), 67–69 (LYR), and 74–75 (GT) each bind FAD. Positions 218, 223, 226, and 241 each coordinate [2Fe-2S] cluster.

The protein belongs to the PyrK family. Heterotetramer of 2 PyrK and 2 PyrD type B subunits. [2Fe-2S] cluster serves as cofactor. The cofactor is FAD.

Its pathway is pyrimidine metabolism; UMP biosynthesis via de novo pathway; orotate from (S)-dihydroorotate (NAD(+) route): step 1/1. Functionally, responsible for channeling the electrons from the oxidation of dihydroorotate from the FMN redox center in the PyrD type B subunit to the ultimate electron acceptor NAD(+). The protein is Dihydroorotate dehydrogenase B (NAD(+)), electron transfer subunit of Listeria monocytogenes serovar 1/2a (strain ATCC BAA-679 / EGD-e).